The primary structure comprises 504 residues: Histidine ammonia-lyase (504 aa).

The segment at residues 142-144 is a cross-link (5-imidazolinone (Ala-Gly)); that stretch reads ASG. Ser143 carries the 2,3-didehydroalanine (Ser) modification.

It belongs to the PAL/histidase family. Contains an active site 4-methylidene-imidazol-5-one (MIO), which is formed autocatalytically by cyclization and dehydration of residues Ala-Ser-Gly.

The protein resides in the cytoplasm. It carries out the reaction L-histidine = trans-urocanate + NH4(+). Its pathway is amino-acid degradation; L-histidine degradation into L-glutamate; N-formimidoyl-L-glutamate from L-histidine: step 1/3. The sequence is that of Histidine ammonia-lyase from Staphylococcus aureus (strain JH1).